Reading from the N-terminus, the 279-residue chain is MQFDVEKIKFLRNKTQAGIMDCQKALINSKGDIDQAIIFLRKQGIKKASEITGKILGEGLTNVIIDNNEAVLYELNSETDFVAKNKIFLDLLNLLGKILLKETKPNMNIDEILNLKFEDKKIKDLLLEKTAIVQEKICLRKVIKVIKKDDENFGMYKHQNGFISVLVITKNSKKDVSEDIAMHIAANKPKFINKEQVDLETLNQEKSIIEAQVNKELGNEKTFNIKEKIIEGRLNKFIQNICLIEQSFVKNPEQKLRDYLKEKEVEIINYWRLEVGERI.

Residues 79-82 (TDFV) form an involved in Mg(2+) ion dislocation from EF-Tu region.

This sequence belongs to the EF-Ts family.

It is found in the cytoplasm. Its function is as follows. Associates with the EF-Tu.GDP complex and induces the exchange of GDP to GTP. It remains bound to the aminoacyl-tRNA.EF-Tu.GTP complex up to the GTP hydrolysis stage on the ribosome. The polypeptide is Elongation factor Ts (Phytoplasma mali (strain AT)).